A 409-amino-acid polypeptide reads, in one-letter code: Probable beta-1,3-galactosyltransferase 3 (409 aa).

A helical; Signal-anchor for type II membrane protein transmembrane segment spans residues 20–42 (WTFLLCFGSFCFGILFTDRMWII).

This sequence belongs to the glycosyltransferase 31 family. The cofactor is Mn(2+).

Its subcellular location is the golgi apparatus membrane. The protein operates within protein modification; protein glycosylation. In terms of biological role, beta-1,3-galactosyltransferase that transfers galactose from UDP-galactose to substrates with a terminal glycosyl residue. The chain is Probable beta-1,3-galactosyltransferase 3 (B3GALT3) from Arabidopsis thaliana (Mouse-ear cress).